The chain runs to 378 residues: Nitronate monooxygenase (378 aa).

Positions 1–15 (MHFPGHSSKKEESAQ) are excised as a propeptide. An FMN-binding site is contributed by 37-39 (PMY). His-196 serves as the catalytic Proton acceptor. His-196 is a binding site for substrate. Residues 229–231 (AGG) and 252–253 (GT) each bind FMN.

This sequence belongs to the nitronate monooxygenase family. NMO class II subfamily. In terms of assembly, homodimer. FMN serves as cofactor.

The catalysed reaction is ethylnitronate + O2 = chemical entity + acetaldehyde + nitrite + H(+). In terms of biological role, catalyzes the oxidation of alkyl nitronates to produce the corresponding carbonyl compounds and nitrites. Anionic forms of nitroalkanes are much better substrates than are neutral forms. The sequence is that of Nitronate monooxygenase (ncd-2) from Neurospora crassa (strain ATCC 24698 / 74-OR23-1A / CBS 708.71 / DSM 1257 / FGSC 987).